The chain runs to 139 residues: Mitochondrial intermembrane space import and assembly protein 40 (139 aa).

3 disulfides stabilise this stretch: Cys53/Cys55, Cys64/Cys97, and Cys74/Cys87. The region spanning 61 to 105 (SGPCGEQFKSAFSCFHYSTEDIKGSDCIDQFRAMQECMQKYPDLY) is the CHCH domain. 2 short sequence motifs (cx9C motif) span residues 64–74 (CGEQFKSAFSC) and 87–97 (CIDQFRAMQEC). Residues 102-139 (PDLYPQDEEEEEEAKPVEPVEETADTKVSAAKEQGTSS) are disordered. Acidic residues predominate over residues 106–124 (PQDEEEEEEAKPVEPVEET).

Monomer. Can form homooligomers. Interacts with GFER and forms transient disulfide bonds with GFER. Interacts with MICU1. Interacts with COX19 forming transient intermolecular disulfide bridges. Interacts with COA7 through transient intermolecular disulfide bonds. Interacts with AIFM1; the interaction increases in presence of NADH. Interacts with NDUFB10. Forms intrachain disulfide bridges, but exists in different redox states. Widely expressed. Present at high level in liver and kidney, followed by lung, brain, heart and spleen (at protein level).

Its subcellular location is the mitochondrion intermembrane space. Functionally, central component of a redox-sensitive mitochondrial intermembrane space import machinery which is required for the biogenesis of respiratory chain complexes. Functions as chaperone and catalyzes the formation of disulfide bonds in substrate proteins, such as COX17, COX19, MICU1 and COA7. Required for the import and folding of small cysteine-containing proteins (small Tim) in the mitochondrial intermembrane space (IMS). Required for the import of COA7 in the IMS. Precursor proteins to be imported into the IMS are translocated in their reduced form into the mitochondria. The oxidized form of CHCHD4/MIA40 forms a transient intermolecular disulfide bridge with the reduced precursor protein, resulting in oxidation of the precursor protein that now contains an intramolecular disulfide bond and is able to undergo folding in the IMS. Reduced CHCHD4/MIA40 is then reoxidized by GFER/ERV1 via a disulfide relay system. Mediates formation of disulfide bond in MICU1 in the IMS, promoting formation of the MICU1-MICU2 heterodimer that regulates mitochondrial calcium uptake. The sequence is that of Mitochondrial intermembrane space import and assembly protein 40 (Chchd4) from Mus musculus (Mouse).